Here is a 76-residue protein sequence, read N- to C-terminus: Conotoxin Cal5a L2 (76 aa).

Residues 1–22 (MRFYIGLMAALMLTSILRTDSA) form the signal peptide. The propeptide occupies 23-42 (SVGQTGTKSELALIERVIRQ). Pro-50 bears the 4-hydroxyproline mark. 4-hydroxyproline; partial is present on residues Pro-58, Pro-62, and Pro-64.

This sequence belongs to the conotoxin T superfamily. Post-translationally, contains 2 disulfide bonds that can be either 'C1-C3, C2-C4' or 'C1-C4, C2-C3', since these disulfide connectivities have been observed for conotoxins with cysteine framework V (for examples, see AC P0DQQ7 and AC P81755). In terms of tissue distribution, expressed by the venom duct.

It localises to the secreted. Functionally, probable neurotoxin with unknown target. Possibly targets ion channels. This is Conotoxin Cal5a L2 from Californiconus californicus (California cone).